The chain runs to 176 residues: Transcription termination/antitermination protein NusG (176 aa).

The KOW domain occupies 125 to 149 (GEVVRVVEGPFANFTATVEEYDVEH).

This sequence belongs to the NusG family.

In terms of biological role, participates in transcription elongation, termination and antitermination. The polypeptide is Transcription termination/antitermination protein NusG (Helicobacter pylori (strain J99 / ATCC 700824) (Campylobacter pylori J99)).